Here is a 429-residue protein sequence, read N- to C-terminus: Glutamate-1-semialdehyde 2,1-aminomutase (429 aa).

The residue at position 265 (Lys-265) is an N6-(pyridoxal phosphate)lysine.

It belongs to the class-III pyridoxal-phosphate-dependent aminotransferase family. HemL subfamily. Homodimer. Pyridoxal 5'-phosphate is required as a cofactor.

Its subcellular location is the cytoplasm. It catalyses the reaction (S)-4-amino-5-oxopentanoate = 5-aminolevulinate. It participates in porphyrin-containing compound metabolism; protoporphyrin-IX biosynthesis; 5-aminolevulinate from L-glutamyl-tRNA(Glu): step 2/2. This Alkalilimnicola ehrlichii (strain ATCC BAA-1101 / DSM 17681 / MLHE-1) protein is Glutamate-1-semialdehyde 2,1-aminomutase.